A 209-amino-acid polypeptide reads, in one-letter code: Octanoyltransferase (209 aa).

The BPL/LPL catalytic domain maps to 30–209; sequence DNEPEIVYLV…IQTEFNKIFK (180 aa). Residues 69–76, 143–145, and 156–158 each bind substrate; these read RGGKFTFH, AIG, and GVA. Cysteine 174 serves as the catalytic Acyl-thioester intermediate.

The protein belongs to the LipB family.

Its subcellular location is the cytoplasm. It catalyses the reaction octanoyl-[ACP] + L-lysyl-[protein] = N(6)-octanoyl-L-lysyl-[protein] + holo-[ACP] + H(+). Its pathway is protein modification; protein lipoylation via endogenous pathway; protein N(6)-(lipoyl)lysine from octanoyl-[acyl-carrier-protein]: step 1/2. Functionally, catalyzes the transfer of endogenously produced octanoic acid from octanoyl-acyl-carrier-protein onto the lipoyl domains of lipoate-dependent enzymes. Lipoyl-ACP can also act as a substrate although octanoyl-ACP is likely to be the physiological substrate. This is Octanoyltransferase from Rickettsia felis (strain ATCC VR-1525 / URRWXCal2) (Rickettsia azadi).